Here is an 89-residue protein sequence, read N- to C-terminus: Ragulator complex protein LAMTOR5 homolog (89 aa).

It belongs to the LAMTOR5 family. In terms of assembly, part of the Ragulator complex.

The protein resides in the cytoplasm. It localises to the lysosome. Regulator of the TOR pathway, a signaling cascade that promotes cell growth in response to growth factors, energy levels, and amino acids. As part of the Ragulator complex, may activate the TOR signaling cascade in response to amino acids. This is Ragulator complex protein LAMTOR5 homolog from Dictyostelium discoideum (Social amoeba).